Consider the following 277-residue polypeptide: Probable diphthine methyl ester synthase (277 aa).

Residues Leu-9, Asp-89, Gly-92, 117-118 (SV), Leu-168, Leu-227, and His-252 contribute to the S-adenosyl-L-methionine site.

Belongs to the diphthine synthase family.

It carries out the reaction 2-[(3S)-amino-3-carboxypropyl]-L-histidyl-[translation elongation factor 2] + 4 S-adenosyl-L-methionine = diphthine methyl ester-[translation elongation factor 2] + 4 S-adenosyl-L-homocysteine + 3 H(+). It functions in the pathway protein modification; peptidyl-diphthamide biosynthesis. Its function is as follows. S-adenosyl-L-methionine-dependent methyltransferase that catalyzes four methylations of the modified target histidine residue in translation elongation factor 2 (EF-2), to form an intermediate called diphthine methyl ester. The four successive methylation reactions represent the second step of diphthamide biosynthesis. This chain is Probable diphthine methyl ester synthase, found in Arabidopsis thaliana (Mouse-ear cress).